The chain runs to 306 residues: MKPTKQILEDILNEVRPLIGQGEVADYIPALACVPSNKLGIAVYTNDGEMITAGDANERFSIQSISKALSLTLAMELYQPEELWHRVGKEPSGQAFNSLIQLEMEQGVPRNPFINAGAIVVADMLFSRFSAPKHRLLEFVRKLSGNEHIIYDRVVANSEMDHSDRNASIAYLMRSFGNFENEVMPVLKNYFHACSLNMSCVDLAKTFGYLANKGIQPETNEFIITPMQSKQINALMATCGLYDGAGEFAYRVGMPGKSGVGGGIIAIVPGEMTIAVWSPELDPSGNSLAGTQALELLSERIGRSIF.

Substrate contacts are provided by S64, N115, E159, N166, Y190, Y242, and V260.

Belongs to the glutaminase family. Homotetramer.

It carries out the reaction L-glutamine + H2O = L-glutamate + NH4(+). The protein is Glutaminase of Aliivibrio salmonicida (strain LFI1238) (Vibrio salmonicida (strain LFI1238)).